Reading from the N-terminus, the 112-residue chain is Chaperone NapD (112 aa).

This sequence belongs to the NapD family. As to quaternary structure, interacts with the cytoplasmic NapA precursor.

It is found in the cytoplasm. In terms of biological role, chaperone for NapA, the catalytic subunit of the periplasmic nitrate reductase. It binds directly and specifically to the twin-arginine signal peptide of NapA, preventing premature interaction with the Tat translocase and premature export. This Paracoccus pantotrophus (Thiosphaera pantotropha) protein is Chaperone NapD.